The chain runs to 149 residues: IQ domain-containing protein F5 (149 aa).

2 consecutive IQ domains span residues 12–41 (ENKA…RAWI) and 68–97 (QEWA…AVRI).

In Bos taurus (Bovine), this protein is IQ domain-containing protein F5 (IQCF5).